The chain runs to 426 residues: Formyl-CoA:oxalate CoA-transferase (426 aa).

Residues 17 to 18 (QS), Arg38, 72 to 75 (LDTK), 96 to 98 (NFG), Arg104, and 136 to 139 (KVYE) contribute to the CoA site. Asp168 serves as the catalytic Nucleophile. Residue 247-249 (GGQ) participates in substrate binding.

It belongs to the CoA-transferase III family. Frc subfamily. In terms of assembly, homodimer.

It catalyses the reaction formyl-CoA + oxalate = oxalyl-CoA + formate. The protein operates within metabolic intermediate degradation; oxalate degradation; CO(2) and formate from oxalate: step 1/2. Its function is as follows. Involved in the catabolism of oxalate and in the adapatation to low pH via the induction of the oxalate-dependent acid tolerance response (ATR). Catalyzes the transfer of the CoA moiety from formyl-CoA to oxalate. The protein is Formyl-CoA:oxalate CoA-transferase of Rhodopseudomonas palustris (strain BisB18).